Here is a 343-residue protein sequence, read N- to C-terminus: Lumican (343 aa).

The signal sequence occupies residues Met1–Cys18. Gln19 is modified (pyrrolidone carboxylic acid). 2 positions are modified to sulfotyrosine: Tyr20 and Tyr22. One can recognise an LRRNT domain in the interval Asp31–Ser69. LRR repeat units lie at residues Gly70–Asn91, Asp94–Lys117, Asn120–Lys140, Thr141–Gly162, Asn165–Lys186, Ser190–Ser211, Leu212–Gly232, and Thr235–Val255. The N-linked (GlcNAc...) (keratan sulfate) asparagine glycan is linked to Asn91. N-linked (GlcNAc...) (keratan sulfate) asparagine glycosylation is present at Asn130. N-linked (GlcNAc...) (keratan sulfate) asparagine glycosylation occurs at Asn165. Asn257 carries an N-linked (GlcNAc...) (keratan sulfate) asparagine glycan. LRR repeat units lie at residues Ser260–Leu281, Glu282–Lys301, and Lys310–Met330. Cys300 and Cys333 are disulfide-bonded. Asn320 is a glycosylation site (N-linked (GlcNAc...) asparagine).

This sequence belongs to the small leucine-rich proteoglycan (SLRP) family. SLRP class II subfamily. In terms of assembly, binds to laminin. In terms of processing, contains keratan sulfate. As to expression, cornea and other tissues.

It is found in the secreted. It localises to the extracellular space. The protein resides in the extracellular matrix. The sequence is that of Lumican (LUM) from Gallus gallus (Chicken).